Consider the following 126-residue polypeptide: Glycine cleavage system H protein (126 aa).

The Lipoyl-binding domain maps to 21-103 (TVTIGISEHA…YEGGWIVKVK (83 aa)). N6-lipoyllysine is present on Lys62.

It belongs to the GcvH family. In terms of assembly, the glycine cleavage system is composed of four proteins: P, T, L and H. Requires (R)-lipoate as cofactor.

The glycine cleavage system catalyzes the degradation of glycine. The H protein shuttles the methylamine group of glycine from the P protein to the T protein. The chain is Glycine cleavage system H protein from Vibrio atlanticus (strain LGP32) (Vibrio splendidus (strain Mel32)).